A 499-amino-acid polypeptide reads, in one-letter code: Probable alpha-L-arabinofuranosidase B (499 aa).

The signal sequence occupies residues M1–A18. The segment at G19–S335 is catalytic. Cystine bridges form between C21–C31, C81–C86, and C176–C177. N83 carries N-linked (GlcNAc...) asparagine glycosylation. Residue N202 is glycosylated (N-linked (GlcNAc...) asparagine). Position 219 (D219) interacts with substrate. Residue E221 is the Nucleophile of the active site. 3 residues coordinate substrate: N222, N223, and G296. Catalysis depends on D297, which acts as the Proton donor. The segment at G336–S499 is ABD. A disulfide bond links C401 and C439. Positions 416, 418, 419, 435, 463, 465, 468, and 488 each coordinate substrate.

The protein belongs to the glycosyl hydrolase 54 family.

Its subcellular location is the secreted. It carries out the reaction Hydrolysis of terminal non-reducing alpha-L-arabinofuranoside residues in alpha-L-arabinosides.. It functions in the pathway glycan metabolism; L-arabinan degradation. Alpha-L-arabinofuranosidase involved in the degradation of arabinoxylan, a major component of plant hemicellulose. Able to hydrolyze 1,5-, 1,3- and 1,2-alpha-linkages not only in L-arabinofuranosyl oligosaccharides, but also in polysaccharides containing terminal non-reducing L-arabinofuranoses in side chains, like L-arabinan, arabinogalactan and arabinoxylan. The chain is Probable alpha-L-arabinofuranosidase B (abfB) from Aspergillus niger (strain ATCC MYA-4892 / CBS 513.88 / FGSC A1513).